Reading from the N-terminus, the 354-residue chain is Carbonic anhydrase 12 (354 aa).

Residues Met1–Ser24 form the signal peptide. Over Ala25 to Ser301 the chain is Extracellular. N-linked (GlcNAc...) asparagine glycosylation is found at Asn28, Asn42, Asn80, and Asn88. The 261-residue stretch at Ser30–Phe290 folds into the Alpha-carbonic anhydrase domain. Residues Cys50 and Cys231 are joined by a disulfide bond. His94 acts as the Proton donor/acceptor in catalysis. Positions 120, 122, and 146 each coordinate Zn(2+). Residue Thr227–Thr228 coordinates substrate. Residues Leu302 to Val322 traverse the membrane as a helical segment. Residues Ser323–Ala354 are Cytoplasmic-facing.

The protein belongs to the alpha-carbonic anhydrase family. In terms of assembly, homodimer. It depends on Zn(2+) as a cofactor.

The protein localises to the membrane. It is found in the cell membrane. It carries out the reaction hydrogencarbonate + H(+) = CO2 + H2O. Its activity is regulated as follows. Inhibited by acetazolamide. Its function is as follows. Reversible hydration of carbon dioxide. This is Carbonic anhydrase 12 from Mus musculus (Mouse).